The sequence spans 93 residues: Small ribosomal subunit protein uS19 (93 aa).

Disordered stretches follow at residues Met-1 to Lys-25 and Phe-74 to Arg-93. Composition is skewed to basic and acidic residues over residues His-14–Asn-23 and Arg-81–Arg-93.

This sequence belongs to the universal ribosomal protein uS19 family.

Functionally, protein S19 forms a complex with S13 that binds strongly to the 16S ribosomal RNA. The protein is Small ribosomal subunit protein uS19 of Beutenbergia cavernae (strain ATCC BAA-8 / DSM 12333 / CCUG 43141 / JCM 11478 / NBRC 16432 / NCIMB 13614 / HKI 0122).